The sequence spans 412 residues: Proline-rich protein 30 (412 aa).

Over residues 33–45 the composition is skewed to polar residues; that stretch reads HNLQPLSAHQSLR. Disordered stretches follow at residues 33 to 75, 123 to 174, and 318 to 412; these read HNLQ…QFGS, PLTP…SNRQ, and PKEV…KSSV. 2 stretches are compositionally biased toward low complexity: residues 126 to 142 and 334 to 350; these read PSFSPSQPQNSSLPHSP and PSPAFQPPAAQARADPA. Residues 353-372 are compositionally biased toward polar residues; sequence TPSQTRSFRSAGLQSPNSPR.

The protein is Proline-rich protein 30 (PRR30) of Macaca fascicularis (Crab-eating macaque).